A 141-amino-acid polypeptide reads, in one-letter code: Myosin regulatory light chain cdc4 (141 aa).

Residues S2 and S6 each carry the phosphoserine modification. EF-hand domains lie at 3-38 (TDDS…CGQN), 74-109 (GDPE…LGEK), and 109-141 (KLSN…ILAN). Ca(2+)-binding residues include D87, D89, T91, M93, and E98.

As to quaternary structure, binds to myosin II chains myo2 and myo3. Interacts with vps27 and a PI 4-kinase pik1. In terms of processing, phosphorylated on either Ser-2 or Ser-6 but not both. Phosphorylation is not essential for the function of the protein.

It localises to the cytoplasm. Its function is as follows. Involved in cytokinesis. Required for the formation and function of the contractile ring. The polypeptide is Myosin regulatory light chain cdc4 (cdc4) (Schizosaccharomyces pombe (strain 972 / ATCC 24843) (Fission yeast)).